Reading from the N-terminus, the 218-residue chain is Monomethylamine corrinoid protein 1 (218 aa).

The B12-binding N-terminal domain maps to 1 to 91 (MANQEIFDKL…ELEKTKVEGE (91 aa)). Residues 94–218 (TGLAITFVAE…AAKVALNIMK (125 aa)) form the B12-binding domain. Histidine 107 lines the methylcob(III)alamin pocket.

This sequence belongs to the methylamine corrinoid protein family. In terms of assembly, can form a complex with MtmB.

The protein operates within one-carbon metabolism; methanogenesis from methylamine. In terms of biological role, acts as a methyl group carrier between MtmB and MtbA. The protein is Monomethylamine corrinoid protein 1 (mtmC1) of Methanosarcina mazei (strain ATCC BAA-159 / DSM 3647 / Goe1 / Go1 / JCM 11833 / OCM 88) (Methanosarcina frisia).